The primary structure comprises 878 residues: Protein daughter of sevenless (878 aa).

In terms of domain architecture, PH spans 3-113 (RTFYEGWLIK…WVNCICQVCH (111 aa)). A disordered region spans residues 132–176 (ENRTQHTSSSGGLSNSTQNTTTTSLHSSAGTTAPQASVPNAGGSA). Positions 136–159 (QHTSSSGGLSNSTQNTTTTSLHSS) are enriched in low complexity. Residues 160 to 169 (AGTTAPQASV) are compositionally biased toward polar residues. The stretch at 246-275 (ALIQAQAAAAAAEQLQQQQQQAARLAVSAN) forms a coiled coil. The disordered stretch occupies residues 391 to 437 (NNNASKQRSDSDSESVFTDDDEWAHPLPLRENVDRSTRPSDSSIENE). Ser399 is subject to Phosphoserine. Residue Thr481 is modified to Phosphothreonine. 2 interaction with DRK regions span residues 638 to 650 (DCPP…KPKV) and 690 to 702 (GPPS…KPNA). 2 disordered regions span residues 686-721 (QQPI…SSGA) and 749-773 (LPRQ…RTAS). 2 stretches are compositionally biased toward polar residues: residues 707 to 718 (NSATMSPATRRS) and 760 to 770 (SPGSMSVQHQR). Thr771 carries the phosphothreonine modification. Phosphotyrosine occurs at positions 801 and 854.

Interacts with DRK. Post-translationally, phosphorylated on Tyr-801 and Tyr-854 in response to sevenless activation, which initiates the recruitment of the phosphatase CSW.

It is found in the cytoplasm. The protein localises to the membrane. Its function is as follows. Essential component for signaling from various receptor tyrosine kinases such as Sevenless, TORSO and DER. Required for photoreceptor cell and wing development. The sequence is that of Protein daughter of sevenless (dos) from Drosophila melanogaster (Fruit fly).